We begin with the raw amino-acid sequence, 119 residues long: Large ribosomal subunit protein bL19 (119 aa).

Belongs to the bacterial ribosomal protein bL19 family.

This protein is located at the 30S-50S ribosomal subunit interface and may play a role in the structure and function of the aminoacyl-tRNA binding site. This is Large ribosomal subunit protein bL19 from Idiomarina loihiensis (strain ATCC BAA-735 / DSM 15497 / L2-TR).